A 301-amino-acid polypeptide reads, in one-letter code: uncharacterized protein (301 aa).

Positions 1–26 (MKGFSCSRPGYLTGLLLLAVAPILTA) are cleaved as a signal peptide. C27 carries the N-palmitoyl cysteine lipid modification. C27 is lipidated: S-diacylglycerol cysteine. The TNase-like domain occupies 46 to 243 (KLKPATIEYW…YNAKINIWSH (198 aa)). A disordered region spans residues 64 to 136 (NYASEERRKE…SKGDSTGDEK (73 aa)). Composition is skewed to basic and acidic residues over residues 67–95 (SEER…KTED) and 120–136 (TPEK…GDEK).

Its subcellular location is the cell membrane. This is an uncharacterized protein from Mycoplasma pneumoniae (strain ATCC 29342 / M129 / Subtype 1) (Mycoplasmoides pneumoniae).